Consider the following 220-residue polypeptide: MKTVLITAFEPFDGEAINPSWESVRQLQNQQLSGAHIETRQLPCVFNTSLTCLYAAIDEIQPELVIAVGQAGGRPDITVERIAININDARIPDNQGNQPIDTPIVATGPAAYFSTLPIKAIVSGLQTAGVPASISQSAGTYICNHVMYGLLHHLALTYPKVRGGLVRGGFIHIPYLPEQAVKHPGTPSMALETITMALKIAINQALENSGDIAISGGMTH.

Active-site residues include Glu-80, Cys-143, and His-172.

This sequence belongs to the peptidase C15 family. As to quaternary structure, homotetramer.

Its subcellular location is the cytoplasm. It carries out the reaction Release of an N-terminal pyroglutamyl group from a polypeptide, the second amino acid generally not being Pro.. Its function is as follows. Removes 5-oxoproline from various penultimate amino acid residues except L-proline. The sequence is that of Pyrrolidone-carboxylate peptidase 1 from Photorhabdus laumondii subsp. laumondii (strain DSM 15139 / CIP 105565 / TT01) (Photorhabdus luminescens subsp. laumondii).